The following is a 473-amino-acid chain: Ribulose bisphosphate carboxylase large chain 2 (473 aa).

Residues N116 and T166 each contribute to the substrate site. The active-site Proton acceptor is K168. K170 contributes to the substrate binding site. The Mg(2+) site is built by K194, D196, and E197. At K194 the chain carries N6-carboxylysine. Catalysis depends on H287, which acts as the Proton acceptor. Residues R288, H320, and S372 each contribute to the substrate site.

Belongs to the RuBisCO large chain family. Type I subfamily. In terms of assembly, heterohexadecamer of 8 large chains and 8 small chains. Mg(2+) serves as cofactor.

It catalyses the reaction 2 (2R)-3-phosphoglycerate + 2 H(+) = D-ribulose 1,5-bisphosphate + CO2 + H2O. It carries out the reaction D-ribulose 1,5-bisphosphate + O2 = 2-phosphoglycolate + (2R)-3-phosphoglycerate + 2 H(+). In terms of biological role, ruBisCO catalyzes two reactions: the carboxylation of D-ribulose 1,5-bisphosphate, the primary event in carbon dioxide fixation, as well as the oxidative fragmentation of the pentose substrate. Both reactions occur simultaneously and in competition at the same active site. This chain is Ribulose bisphosphate carboxylase large chain 2, found in Cereibacter sphaeroides (strain ATCC 17025 / ATH 2.4.3) (Rhodobacter sphaeroides).